An 83-amino-acid polypeptide reads, in one-letter code: Small ribosomal subunit protein uS17 (83 aa).

The protein belongs to the universal ribosomal protein uS17 family. Part of the 30S ribosomal subunit.

One of the primary rRNA binding proteins, it binds specifically to the 5'-end of 16S ribosomal RNA. This is Small ribosomal subunit protein uS17 from Chlamydia muridarum (strain MoPn / Nigg).